Consider the following 240-residue polypeptide: Putative tyrosine phosphatase 067L (240 aa).

Residues 3 to 151 (QASFFVADKA…EREWPLNPTQ (149 aa)) enclose the Tyrosine-protein phosphatase domain. The active-site Phosphocysteine intermediate is Cys-96.

This sequence belongs to the protein-tyrosine phosphatase family.

It carries out the reaction O-phospho-L-tyrosyl-[protein] + H2O = L-tyrosyl-[protein] + phosphate. The polypeptide is Putative tyrosine phosphatase 067L (Aedes vexans (Inland floodwater mosquito)).